Reading from the N-terminus, the 482-residue chain is Anaerobic nitric oxide reductase flavorubredoxin (482 aa).

The tract at residues 30–210 (LRGSSYNSYL…PFSRLVTPKI (181 aa)) is zinc metallo-hydrolase. Fe cation is bound by residues H79, E81, D83, H147, D166, and H227. The region spanning 254–393 (ITLFYDTMSN…ICRQHGREIA (140 aa)) is the Flavodoxin-like domain. Residues 260 to 264 (TMSNN) and 342 to 369 (AFGSHGWSGGAVDRLSTRLQDAGFEMSM) each bind FMN. The region spanning 426–477 (GPCMQCSVCQWVYDPALGEPLQDVAPGTPWSDVPDNFLCPECSLGKDVFDVL) is the Rubredoxin-like domain. 4 residues coordinate Fe cation: C431, C434, C464, and C467.

The protein in the N-terminal section; belongs to the zinc metallo-hydrolase group 3 family. In terms of assembly, homotetramer. The cofactor is Fe cation. FMN is required as a cofactor.

It localises to the cytoplasm. Its pathway is nitrogen metabolism; nitric oxide reduction. In terms of biological role, anaerobic nitric oxide reductase; uses NADH to detoxify nitric oxide (NO), protecting several 4Fe-4S NO-sensitive enzymes. Has at least 2 reductase partners, only one of which (NorW, flavorubredoxin reductase) has been identified. NO probably binds to the di-iron center; electrons enter from the NorW at rubredoxin and are transferred sequentially to the FMN center and the di-iron center. Also able to function as an aerobic oxygen reductase. In Enterobacter sp. (strain 638), this protein is Anaerobic nitric oxide reductase flavorubredoxin.